The chain runs to 454 residues: Flagellar hook protein FlgE (454 aa).

The protein belongs to the flagella basal body rod proteins family.

It localises to the bacterial flagellum basal body. Functionally, a flexible structure which links the flagellar filament to the drive apparatus in the basal body. Absence of the gene leads to absence of the hook protein, lack of the flagellar filament and thus loss of mobility. Approximately wild-type levels of the flagellar subunits are still produced and accumulate mostly in the cytosol. The polypeptide is Flagellar hook protein FlgE (flgE) (Helicobacter mustelae).